We begin with the raw amino-acid sequence, 20 residues long: Short cationic peptide-3a (20 aa).

Glu20 bears the Glutamic acid 1-amide mark.

Expressed by the venom gland.

It localises to the secreted. This chain is Short cationic peptide-3a, found in Cupiennius salei (American wandering spider).